Here is a 615-residue protein sequence, read N- to C-terminus: Dihydroxy-acid dehydratase (615 aa).

Mg(2+) is bound at residue Asp81. Residue Cys122 coordinates [2Fe-2S] cluster. Mg(2+)-binding residues include Asp123 and Lys124. At Lys124 the chain carries N6-carboxylysine. Cys197 lines the [2Fe-2S] cluster pocket. Glu494 serves as a coordination point for Mg(2+). Ser520 serves as the catalytic Proton acceptor.

It belongs to the IlvD/Edd family. As to quaternary structure, homodimer. It depends on [2Fe-2S] cluster as a cofactor. The cofactor is Mg(2+).

It carries out the reaction (2R)-2,3-dihydroxy-3-methylbutanoate = 3-methyl-2-oxobutanoate + H2O. The catalysed reaction is (2R,3R)-2,3-dihydroxy-3-methylpentanoate = (S)-3-methyl-2-oxopentanoate + H2O. It functions in the pathway amino-acid biosynthesis; L-isoleucine biosynthesis; L-isoleucine from 2-oxobutanoate: step 3/4. It participates in amino-acid biosynthesis; L-valine biosynthesis; L-valine from pyruvate: step 3/4. In terms of biological role, functions in the biosynthesis of branched-chain amino acids. Catalyzes the dehydration of (2R,3R)-2,3-dihydroxy-3-methylpentanoate (2,3-dihydroxy-3-methylvalerate) into 2-oxo-3-methylpentanoate (2-oxo-3-methylvalerate) and of (2R)-2,3-dihydroxy-3-methylbutanoate (2,3-dihydroxyisovalerate) into 2-oxo-3-methylbutanoate (2-oxoisovalerate), the penultimate precursor to L-isoleucine and L-valine, respectively. The chain is Dihydroxy-acid dehydratase from Salinispora arenicola (strain CNS-205).